A 234-amino-acid chain; its full sequence is Sugar fermentation stimulation protein A (234 aa).

Residues 201 to 220 (LLSEAQNKGVEVLAYKAELS) constitute a DNA-binding region (H-T-H motif).

This sequence belongs to the SfsA family.

In terms of biological role, binds to DNA non-specifically. Could be a regulatory factor involved in maltose metabolism. The sequence is that of Sugar fermentation stimulation protein A from Salmonella gallinarum (strain 287/91 / NCTC 13346).